The chain runs to 535 residues: MYQRLKEINFRKPLELEWNSIFLILGFFVLAAILIAWTQRPDEELLLERLKDLDLPIVGVGPNINVSESLEIGTQTYPNSPYVVPADRVPIVILPNSAINIIKSLPEAKISFEKEVYARHLAHLLLKKDQKIFSEPILNSIKQDLTRNISKTLDTLWDEVDYAFEKNIGTLPDDDDGWKNVSVYGKVLNVVALLSGRVFVGAPLCRDEEWIKATIAYTIILGVTVGMLWKRPWWQRKILAPLYFRTLVGVHKKAEELLKPLLEREAALDPSEWEKKAGEQNDGQLIRWLLSHTPQKGGKIDVKQLAHDQLTVSLAAIHTTSITISHLLYDLATYPEHVAPLRTELESVIADHKTAGGNGKLSKVELTKLWKMDSFIKESQRLNPPILVQMRRYLTSPLALPSGHILPSGTFCGVDAQMTNRTVPYYEASPITHQQTPFDTFDGFRFSKLRSVPGNENRYQFVTSSTESLNFGHGTHACPGRFFASNEIKIAFAEVLLKWDVRLKPGEGRPANLYTDTNVMPNMKGEVQMRRRELI.

A helical transmembrane segment spans residues 20 to 37 (SIFLILGFFVLAAILIAW). N-linked (GlcNAc...) asparagine glycosylation is found at Asn-65, Asn-148, Asn-180, and Asn-420. Residue Cys-478 participates in heme binding.

This sequence belongs to the cytochrome P450 family. Heme is required as a cofactor.

It localises to the membrane. It participates in polyketide biosynthesis. Its function is as follows. Cytochrome P450 monooxygenase; part of the gene cluster B that mediates the biosynthesis of botcinic acid and its botcinin derivatives, acetate-derived polyketides that contribute to virulence when combined with the sesquiterpene botrydial. Botcinic acid and its derivatives have been shown to induce chlorosis and necrosis during host plant infection, but also have antifungal activities. Two polyketide synthases, BOA6 and BOA9, are involved in the biosynthesis of botcinins. BOA6 mediates the formation of the per-methylated tetraketide core by condensation of four units of malonyl-CoA with one unit of acetyl-CoA, which would be methylated in activated methylene groups to yield a bicyclic acid intermediate that could then either be converted to botrylactone derivatives or lose the starter acetate unit through a retro-Claisen type C-C bond cleavage to yield botcinin derivatives. The second polyketide synthase, BOA9, is probably required for the biosynthesis of the tetraketide side chain of botcinins. The methyltransferase (MT) domain within BOA6 is probably responsible for the incorporation of four methyl groups. The trans-enoyl reductase BOA5 might take over the enoyl reductase function of BOA6 that misses an ER domain. The monooxygenases BOA2, BOA3 and BOA4 might be involved in further hydroxylations at C4, C5 and C8, whereas BOA7, close to BOA9, could potentially be involved in the hydroxylation at C4 in the side chain of botcinins. The chain is Cytochrome P450 monooxygenase BOA7 from Botryotinia fuckeliana (strain B05.10) (Noble rot fungus).